Here is a 185-residue protein sequence, read N- to C-terminus: Coiled-coil domain-containing protein 32 (185 aa).

Positions 78–98 (LASLEKKLRRIKGLNQEVTSK) form a coiled coil. The tract at residues 159–185 (IPPESQVEKPVAEDEPAAGDKPAAAEQ) is disordered.

As to quaternary structure, interacts with AP2S1; the interaction is direct and mediates association with adaptor protein complex 2 (AP-2).

It is found in the membrane. The protein resides in the coated pit. Functionally, regulates clathrin-mediated endocytsois of cargos such as transferrin probably through the association and modulation of adaptor protein complex 2 (AP-2). Has a role in ciliogenesis. Required for proper cephalic and left/right axis development. This Homo sapiens (Human) protein is Coiled-coil domain-containing protein 32.